The chain runs to 383 residues: MYTFSGSKPTQLYMDILSTVIKEGDVLAPRGKRIKEIRPVMIEFKNPIRRTTFLKGRNINPFFQVAESLWILAGRSDVGFLLDYNKNMGQFSDDGVFFNAPYGERLRFWNRSDANNFIYNPLDQLRDVYEKIKADPDTRQAVAVIYNPLFDNINNDTKDRPCNLLLSFKLRNGKLDLSVYNRSNDLHWGTFGANLCQFSTILEAMATWLGVEVGSYYQITDSLHVYLDDYGAKITEDIQKVYGVNLETDEAPVVEDFEELLDPNPRMSYTMNELNQFLNEYFGIVDSLMRDDETYMHDGDCAQMLLNQIRHEPDEYIKVTLLLMVAKQALNRGMKDTVATAMNWIPLCEIKVSALRFLYKSYPEYINQYDLDEKLMKYIRREE.

Cysteine 162 is an active-site residue.

Belongs to the thymidylate synthase family. In terms of assembly, homodimer.

The catalysed reaction is dUMP + (6R)-5,10-methylene-5,6,7,8-tetrahydrofolate + H2O = 5-hydroxymethyl-dUMP + (6S)-5,6,7,8-tetrahydrofolate. Its function is as follows. Catalyzes formation of 5-hydroxymethyldeoxyuridylate (5HMdUMP) as a step in the pathway that replaces dTMP by thymidine hypermodifications in the viral genome. As a final result of the pathway of hypermodification, hydroxymethyluracil substitutes for a subset of thymidines in the viral DNA. These modifications probably prevent degradation of viral DNA by the host restriction-modification antiviral defense system. The protein is Deoxyuridylate hydroxymethyltransferase of Bacillus subtilis (Bacteriophage SP01).